The primary structure comprises 157 residues: Crossover junction endodeoxyribonuclease RuvC (157 aa).

Residues D7, E67, and D139 contribute to the active site. Mg(2+) is bound by residues D7, E67, and D139.

This sequence belongs to the RuvC family. As to quaternary structure, homodimer which binds Holliday junction (HJ) DNA. The HJ becomes 2-fold symmetrical on binding to RuvC with unstacked arms; it has a different conformation from HJ DNA in complex with RuvA. In the full resolvosome a probable DNA-RuvA(4)-RuvB(12)-RuvC(2) complex forms which resolves the HJ. Mg(2+) is required as a cofactor.

The protein localises to the cytoplasm. It carries out the reaction Endonucleolytic cleavage at a junction such as a reciprocal single-stranded crossover between two homologous DNA duplexes (Holliday junction).. Functionally, the RuvA-RuvB-RuvC complex processes Holliday junction (HJ) DNA during genetic recombination and DNA repair. Endonuclease that resolves HJ intermediates. Cleaves cruciform DNA by making single-stranded nicks across the HJ at symmetrical positions within the homologous arms, yielding a 5'-phosphate and a 3'-hydroxyl group; requires a central core of homology in the junction. The consensus cleavage sequence is 5'-(A/T)TT(C/G)-3'. Cleavage occurs on the 3'-side of the TT dinucleotide at the point of strand exchange. HJ branch migration catalyzed by RuvA-RuvB allows RuvC to scan DNA until it finds its consensus sequence, where it cleaves and resolves the cruciform DNA. The sequence is that of Crossover junction endodeoxyribonuclease RuvC from Prochlorococcus marinus (strain MIT 9301).